Here is a 704-residue protein sequence, read N- to C-terminus: MEETFVPFEGIKNDLKGRLMCYKQDWTGGFKAGFRILAPTTYIFFASAIPVISFGEQLERSTDGVLTAVQTLASTAICGMIHSIIGGQPLLILGVAEPTVIMYTFMFNFAKARPELGRDLFLAWSGWVCVWTALMLFVLAICGACSIINRFTRVAGELFGLLIAMLFMQQAIKGLVDEFRIPERENQKLKEFLPSWRFANGMFALVLSFGLLLTGLRSRKARSWRYGTGWLRSLIADYGVPLMVLVWTGVSYIPAGDVPKGIPRRLFSPNPWSPGAYGNWTVVKEMLDVPIVYIIGAFIPASMIAVLYYFDHSVASQLAQQKEFNLRKPSSYHYDLLLLGFLTLMCGLLGVPPSNGVIPQSPMHTKSLATLKYQLLRNRLVATARRSIKTNASLGQLYDNMQEAYHHMQTPLVYQQPQGLKELKESTIQATTFTGNLNAPVDETLFDIEKEIDDLLPVEVKEQRVSNLLQSTMVGGCVAAMPILKMIPTSVLWGYFAFMAIESLPGNQFWERILLLFTAPSRRFKVLEDYHATFVETVPFKTIAMFTLFQTTYLLICFGLTWIPIAGVMFPLMIMFLIPVRQYLLPRFFKGAHLQDLDAAEYEEAPALPFNLAAETEIGSTTSYPGDLEILDEVMTRSRGEFRHTSSPKVTSSSSTPVNNRSLSQVFSPRVSGIRLGQMSPRVVGNSPKPASCGRSPLNQSSSN.

The Cytoplasmic portion of the chain corresponds to 1 to 35 (MEETFVPFEGIKNDLKGRLMCYKQDWTGGFKAGFR). A helical membrane pass occupies residues 36–56 (ILAPTTYIFFASAIPVISFGE). Topologically, residues 57–75 (QLERSTDGVLTAVQTLAST) are extracellular. A helical membrane pass occupies residues 76–96 (AICGMIHSIIGGQPLLILGVA). Topologically, residues 97-120 (EPTVIMYTFMFNFAKARPELGRDL) are cytoplasmic. A helical transmembrane segment spans residues 121-141 (FLAWSGWVCVWTALMLFVLAI). The Extracellular segment spans residues 142–155 (CGACSIINRFTRVA). Residues 156–176 (GELFGLLIAMLFMQQAIKGLV) traverse the membrane as a helical segment. Over 177–195 (DEFRIPERENQKLKEFLPS) the chain is Cytoplasmic. The helical transmembrane segment at 196-216 (WRFANGMFALVLSFGLLLTGL) threads the bilayer. Residues 217 to 233 (RSRKARSWRYGTGWLRS) are Extracellular-facing. Residues 234–254 (LIADYGVPLMVLVWTGVSYIP) form a helical membrane-spanning segment. Residues 255–289 (AGDVPKGIPRRLFSPNPWSPGAYGNWTVVKEMLDV) lie on the Cytoplasmic side of the membrane. A helical membrane pass occupies residues 290–310 (PIVYIIGAFIPASMIAVLYYF). The Extracellular segment spans residues 311-337 (DHSVASQLAQQKEFNLRKPSSYHYDLL). Residues 338–358 (LLGFLTLMCGLLGVPPSNGVI) form a helical membrane-spanning segment. Over 359-480 (PQSPMHTKSL…STMVGGCVAA (122 aa)) the chain is Cytoplasmic. Residues 481–501 (MPILKMIPTSVLWGYFAFMAI) form a helical membrane-spanning segment. At 502-557 (ESLPGNQFWERILLLFTAPSRRFKVLEDYHATFVETVPFKTIAMFTLFQTTYLLIC) the chain is on the extracellular side. Residues 558-578 (FGLTWIPIAGVMFPLMIMFLI) form a helical membrane-spanning segment. The Cytoplasmic portion of the chain corresponds to 579-704 (PVRQYLLPRF…RSPLNQSSSN (126 aa)). The interval 641-704 (EFRHTSSPKV…RSPLNQSSSN (64 aa)) is disordered. Over residues 647–664 (SPKVTSSSSTPVNNRSLS) the composition is skewed to low complexity.

It belongs to the anion exchanger (TC 2.A.31.3) family. As to expression, expressed in proximal side of various root cells, notably in the columella, lateral root cap, epidermis and endodermis in tip and elongation zones of the root. Also detected in the epidermis, cortex, endodermis, and stele cells of the root hair zone. Observed in cotyledons and hypocotyls.

The protein localises to the cell membrane. The protein resides in the endosome membrane. It is found in the vacuole membrane. Efflux-type boron (B) transporter for xylem loading, responsive of boron translocation from roots to shoots under boron limitation. Boron is essential for maintaining the integrity of plants cell walls. This is Boron transporter 1 from Arabidopsis thaliana (Mouse-ear cress).